Reading from the N-terminus, the 414-residue chain is NADH-dependent flavin oxidoreductase iccE (414 aa).

Residues 25-28 and glutamine 107 each bind FMN; that span reads TAIA. 188–191 serves as a coordination point for substrate; it reads HASH. Position 347 to 348 (347 to 348) interacts with FMN; it reads AR.

Belongs to the NADH:flavin oxidoreductase/NADH oxidase family.

It catalyses the reaction 8-epi-ilicicolin H = ilicicolin H. Its pathway is mycotoxin biosynthesis. Its function is as follows. NADH-dependent flavin oxidoreductase; part of the gene cluster that mediates the biosynthesis of ilicicolin H, a 4-hydroxy-2-pyridonealkaloid that has potent and broad antifungal activities by inhibiting the mitochondrial respiration chain. IccE acts as an epimerase and catalyzes the conversion of 8-epi-ilicicolin H into the final product ilicicolin H. The biosynthesis of ilicicolin H starts with formation of the tetramic acid by the hybrid PKS-NRPS synthetase iccA with the partnering trans-enoyl reductase iccB since iccA lacks a designated enoylreductase (ER) domain. The cytochrome P450 monooxygenase iccC then catalyzes the ring expansion of the tetramate to the acyclic 2-pyridone. The pericyclase iccD further converts the acyclic 2-pyridone into 8-epi-ilicicolin H. Finally, the epimerase iccE converts 8-epi-ilicicolin H into ilicicolin H via epimerization. IccA to iccE are sufficient for ilicicolin H biosynthesis and the roles of the remaining enzymes, iccF, iccG and iccH within the pathway have still to be determined. The sequence is that of NADH-dependent flavin oxidoreductase iccE from Talaromyces variabilis (Penicillium variabile).